A 238-amino-acid chain; its full sequence is Ion-translocating oxidoreductase complex subunit E (238 aa).

6 helical membrane passes run 20–40, 41–61, 72–92, 95–115, 130–150, and 185–205; these read ALVQ…VVNA, LGLG…VSLI, PAFV…MKAF, ELYQ…AVLG, AVDG…VGAV, and NVIF…LIAA.

This sequence belongs to the NqrDE/RnfAE family. The complex is composed of six subunits: RnfA, RnfB, RnfC, RnfD, RnfE and RnfG.

Its subcellular location is the cell inner membrane. In terms of biological role, part of a membrane-bound complex that couples electron transfer with translocation of ions across the membrane. This Cellvibrio japonicus (strain Ueda107) (Pseudomonas fluorescens subsp. cellulosa) protein is Ion-translocating oxidoreductase complex subunit E.